The chain runs to 1641 residues: Ophiophagus venom factor (1641 aa).

A signal peptide spans 1–22 (MEGMALYLVAALLIGFPGSSHG). N-linked (GlcNAc...) asparagine glycosylation is found at Asn181 and Asn209. Mg(2+) contacts are provided by Pro507, Asp530, Val531, and Asp533. 12 disulfide bridges follow: Cys535–Cys796, Cys604–Cys639, Cys672–Cys699, Cys673–Cys706, Cys686–Cys707, Cys852–Cys1491, Cys1336–Cys1467, Cys1367–Cys1436, Cys1484–Cys1489, Cys1496–Cys1568, Cys1515–Cys1639, and Cys1615–Cys1624. A propeptide spanning residues 645 to 728 (RRRRSSVLLL…WESGLFLPRN (84 aa)) is cleaved from the precursor. The interval 649 to 727 (SSVLLLDSKA…QWESGLFLPR (79 aa)) is C3a-like domain. The Anaphylatoxin-like domain maps to 672 to 707 (CCEDSMHENPMGYTCEKRAKYIQEGDACKAAFLECC). Positions 731–742 (EDGFIQDSDIIP) are factor B binding site. Residues 981 to 1259 (HLIITPSGCG…VMLFQALAEY (279 aa)) constitute a propeptide that is removed on maturation. The interval 981–1259 (HLIITPSGCG…VMLFQALAEY (279 aa)) is C3d-like domain. Residues 989–992 (CGEQ) constitute a cross-link (isoglutamyl cysteine thioester (Cys-Gln)). The interval 1186–1249 (VLMAASTGKN…GGTYGQTQAT (64 aa)) is factor H binding site. In terms of domain architecture, NTR spans 1496-1639 (CSLLSQQEKI…LSNILTIFGC (144 aa)).

Belongs to the venom complement C3 homolog family. In terms of assembly, heterotrimer of alpha, beta and gamma chains; disulfide-linked. May be active with factor B in the presence of factor D. Post-translationally, first processed by the removal of 4 Arg residues by furin-type protease, forming two chains, alpha and gamma/beta precursor, linked by a disulfide bond. Probably, a cobrin-like protease cleaves the C3a-like domain and then the C3d-like domain, generating the mature venom factor (OVF). The beta chain is not glycosylated. In terms of tissue distribution, expressed by the venom gland.

The protein resides in the secreted. Its function is as follows. Complement-activating protein in cobra venom. It is a structural and functional analog of complement component C3b, the activated form of C3. It binds factor B (CFB), which is subsequently cleaved by factor D (CFD) to form the bimolecular complex OVF/Bb. OVF/Bb is a C3/C5 convertase that cleaves both complement components C3 and C5. Structurally, it resembles the C3b degradation product C3c, which is not able to form a C3/C5 convertase. Unlike C3b/Bb, OVF/Bb is a stable complex and completely resistant to the actions of complement regulatory factors H (CFH) and I (CFI). Therefore, OVF continuously activates complement. As a result, OVF exhibits complement-depleting activity. The polypeptide is Ophiophagus venom factor (Ophiophagus hannah (King cobra)).